Reading from the N-terminus, the 276-residue chain is NH(3)-dependent NAD(+) synthetase (276 aa).

43–50 (GISGGVDS) provides a ligand contact to ATP. Residue Asp49 participates in Mg(2+) binding. Deamido-NAD(+) is bound at residue Arg146. Thr166 is a binding site for ATP. Glu171 lines the Mg(2+) pocket. 2 residues coordinate deamido-NAD(+): Lys179 and Asp186. Residues Lys195 and Thr217 each coordinate ATP. Position 266–267 (266–267 (HK)) interacts with deamido-NAD(+).

Belongs to the NAD synthetase family. Homodimer.

It carries out the reaction deamido-NAD(+) + NH4(+) + ATP = AMP + diphosphate + NAD(+) + H(+). Its pathway is cofactor biosynthesis; NAD(+) biosynthesis; NAD(+) from deamido-NAD(+) (ammonia route): step 1/1. Its function is as follows. Catalyzes the ATP-dependent amidation of deamido-NAD to form NAD. Uses ammonia as a nitrogen source. The chain is NH(3)-dependent NAD(+) synthetase from Shewanella halifaxensis (strain HAW-EB4).